The sequence spans 1275 residues: Mediator of RNA polymerase II transcription subunit 33B (1275 aa).

Positions 772–791 are enriched in low complexity; sequence GSQSLTPSSGSSSLSTSGGD. Positions 772 to 792 are disordered; the sequence is GSQSLTPSSGSSSLSTSGGDD.

Belongs to the Mediator complex subunit 33 family. As to quaternary structure, component of the Mediator complex. Ubiquitous.

The protein localises to the nucleus. Functionally, component of the Mediator complex, a coactivator involved in the regulated transcription of nearly all RNA polymerase II-dependent genes. Mediator functions as a bridge to convey information from gene-specific regulatory proteins to the basal RNA polymerase II transcription machinery. The Mediator complex, having a compact conformation in its free form, is recruited to promoters by direct interactions with regulatory proteins and serves for the assembly of a functional preinitiation complex with RNA polymerase II and the general transcription factors. Involved in the repression of phenylpropanoid biosynthesis. May compete with MED33B for common binding partners or for occupancy in Mediator. This is Mediator of RNA polymerase II transcription subunit 33B (MED33B) from Arabidopsis thaliana (Mouse-ear cress).